The primary structure comprises 461 residues: Steroidogenic factor 1 (461 aa).

A DNA-binding region (nuclear receptor) is located at residues 10-85 (DELCPVCGDK…VGMRLEAVRA (76 aa)). Residues 13 to 33 (CPVCGDKVSGYHYGLLTCESC) form an NR C4-type zinc finger. N6-acetyllysine is present on residues lysine 34, lysine 38, and lysine 72. Residues 49-73 (CTESQSCKIDKTLRKRCPFCRFQKC) form an NR C4-type zinc finger. A Glycyl lysine isopeptide (Lys-Gly) (interchain with G-Cter in SUMO) cross-link involves residue lysine 119. The interval 119–153 (KLETGPPMGVPPPPPPPPDYMLPPGLHVPEPKGLA) is disordered. Pro residues predominate over residues 126-139 (MGVPPPPPPPPDYM). A Glycyl lysine isopeptide (Lys-Gly) (interchain with G-Cter in SUMO) cross-link involves residue lysine 194. Serine 203 carries the post-translational modification Phosphoserine; by CDK7. The 238-residue stretch at 222-459 (GVPELILQLL…NLLIEMLQAK (238 aa)) folds into the NR LBD domain. Positions 341, 436, and 440 each coordinate a 1,2-diacyl-sn-glycero-3-phosphocholine.

This sequence belongs to the nuclear hormone receptor family. NR5 subfamily. As to quaternary structure, binds DNA as a monomer. Part of a complex consisting of SFPQ, NONO and NR5A1. Interacts with NR0B2. Interacts with DGKQ and CDK7. Binds to and activated by HIPK3. Post-translationally, acetylation stimulates the transcriptional activity. In terms of processing, sumoylation reduces CDK7-mediated phosphorylation on Ser-203. Phosphorylated on Ser-203 by CDK7. This phosphorylation promotes transcriptional activity.

The protein localises to the nucleus. Transcriptional activator. Seems to be essential for sexual differentiation and formation of the primary steroidogenic tissues. Binds to the Ad4 site found in the promoter region of steroidogenic P450 genes such as CYP11A, CYP11B and CYP21B. Also regulates the AMH/Muellerian inhibiting substance gene as well as the AHCH and STAR genes. 5'-YCAAGGYC-3' and 5'-RRAGGTCA-3' are the consensus sequences for the recognition by NR5A1. The SFPQ-NONO-NR5A1 complex binds to the CYP17 promoter and regulates basal and cAMP-dependent transcriptional activity. Binds phospholipids with a phosphatidylinositol (PI) headgroup, in particular PI(3,4)P2 and PI(3,4,5)P3. Activated by the phosphorylation of NR5A1 by HIPK3 leading to increased steroidogenic gene expression upon cAMP signaling pathway stimulation. The chain is Steroidogenic factor 1 (NR5A1) from Equus caballus (Horse).